A 291-amino-acid chain; its full sequence is Lys-63-specific deubiquitinase BRCC36-like (291 aa).

In terms of domain architecture, MPN spans 12 to 179 (VYLESDAFLV…YTCFQSVQAS (168 aa)). Zn(2+)-binding residues include H122, H124, and D135. The JAMM motif motif lies at 122-135 (HSHPHITVWPSHVD). Residues 259–286 (LQWLEDRLEQNQQRLQELEQEKEDLMEE) adopt a coiled-coil conformation.

The protein belongs to the peptidase M67A family. BRCC36 subfamily.

Functionally, metalloprotease that specifically cleaves 'Lys-63'-linked polyubiquitin chains. The sequence is that of Lys-63-specific deubiquitinase BRCC36-like from Mus musculus (Mouse).